The primary structure comprises 1103 residues: Retinal guanylyl cyclase 1 (1103 aa).

A signal peptide spans 1 to 51 (MTACARRAGGLPDPGLCGPAWWAPSLPRLPRALPRLPLLLLLLLLQPPALS). Over 52–462 (AVFTVGVLGP…PNNICGGGLE (411 aa)) the chain is Extracellular. N-linked (GlcNAc...) asparagine glycosylation occurs at Asn-297. The chain crosses the membrane as a helical span at residues 463-487 (PGLVFLGFLLVVGMGLAGAFLAHYV). Residues 488-1103 (RHRLLHMQMV…LEKARPGQFS (616 aa)) lie on the Cytoplasmic side of the membrane. The Protein kinase domain occupies 525-808 (QGSRSSLGAR…DHTFDLFKNI (284 aa)). A Guanylate cyclase domain is found at 880–1010 (TLYFSDIVGF…DTVNTASRME (131 aa)). Residues 1065–1103 (PIPKPPDLQPGSSNHGISLQEIPPERRRKLEKARPGQFS) form a disordered region.

Belongs to the adenylyl cyclase class-4/guanylyl cyclase family. In terms of assembly, homodimer; requires homodimerization for guanylyl cyclase activity. Interacts with RD3; promotes the exit of GUCY2D from the endoplasmic reticulum and its trafficking to the photoreceptor outer segments. Interaction with RD3 negatively regulates guanylate cyclase activity. In terms of tissue distribution, retina.

The protein localises to the photoreceptor outer segment membrane. It is found in the endoplasmic reticulum membrane. It carries out the reaction GTP = 3',5'-cyclic GMP + diphosphate. With respect to regulation, activated by GUCA1A when free calcium ions concentration is low, and inhibited by GUCA1A when free calcium ions concentration is high. Negatively regulated by RD3; inhibits the basal and GUCA1A-stimulated guanylate cyclase activity. Its function is as follows. Catalyzes the synthesis of cyclic GMP (cGMP) in rods and cones of photoreceptors. Plays an essential role in phototransduction, by mediating cGMP replenishment. May also participate in the trafficking of membrane-asociated proteins to the photoreceptor outer segment membrane. The sequence is that of Retinal guanylyl cyclase 1 (GUCY2D) from Homo sapiens (Human).